The following is a 477-amino-acid chain: Argininosuccinate lyase (477 aa).

Positions 1-18 are enriched in polar residues; sequence MTTSSHSSEQPTSTQTSG. The interval 1-21 is disordered; the sequence is MTTSSHSSEQPTSTQTSGMWG.

Belongs to the lyase 1 family. Argininosuccinate lyase subfamily.

The protein localises to the cytoplasm. It catalyses the reaction 2-(N(omega)-L-arginino)succinate = fumarate + L-arginine. It functions in the pathway amino-acid biosynthesis; L-arginine biosynthesis; L-arginine from L-ornithine and carbamoyl phosphate: step 3/3. In Acinetobacter baylyi (strain ATCC 33305 / BD413 / ADP1), this protein is Argininosuccinate lyase.